The sequence spans 398 residues: uncharacterized protein (398 aa).

A helical membrane pass occupies residues 88–108 (IGFTIGFAIFFILLFLLSNMV).

It to B.megaterium SpoIV.

It localises to the cell membrane. This is an uncharacterized protein from Bacillus subtilis (strain 168).